The primary structure comprises 635 residues: tRNA 5-methylaminomethyl-2-thiouridine biosynthesis bifunctional protein MnmC (635 aa).

The tRNA (mnm(5)s(2)U34)-methyltransferase stretch occupies residues 1-227 (MSEPIDWLPD…KRSNLQAEFD (227 aa)). The interval 254–635 (IGGGLSGAAV…ALSTERLPAD (382 aa)) is FAD-dependent cmnm(5)s(2)U34 oxidoreductase.

It in the N-terminal section; belongs to the methyltransferase superfamily. tRNA (mnm(5)s(2)U34)-methyltransferase family. The protein in the C-terminal section; belongs to the DAO family. It depends on FAD as a cofactor.

The protein localises to the cytoplasm. It carries out the reaction 5-aminomethyl-2-thiouridine(34) in tRNA + S-adenosyl-L-methionine = 5-methylaminomethyl-2-thiouridine(34) in tRNA + S-adenosyl-L-homocysteine + H(+). Catalyzes the last two steps in the biosynthesis of 5-methylaminomethyl-2-thiouridine (mnm(5)s(2)U) at the wobble position (U34) in tRNA. Catalyzes the FAD-dependent demodification of cmnm(5)s(2)U34 to nm(5)s(2)U34, followed by the transfer of a methyl group from S-adenosyl-L-methionine to nm(5)s(2)U34, to form mnm(5)s(2)U34. This Paracidovorax citrulli (strain AAC00-1) (Acidovorax citrulli) protein is tRNA 5-methylaminomethyl-2-thiouridine biosynthesis bifunctional protein MnmC.